The chain runs to 621 residues: Chaperone protein DnaK (621 aa).

Residue T179 is modified to Phosphothreonine; by autocatalysis. Over residues 583–605 (SQVQDTQGAAQGQSQGNPQQTAD) the composition is skewed to polar residues. Positions 583–621 (SQVQDTQGAAQGQSQGNPQQTADNRGKVVDAEIVDENKE) are disordered. A compositionally biased stretch (basic and acidic residues) spans 606 to 621 (NRGKVVDAEIVDENKE).

The protein belongs to the heat shock protein 70 family.

Acts as a chaperone. This is Chaperone protein DnaK from Endomicrobium trichonymphae.